The sequence spans 510 residues: NAD(P)H-quinone oxidoreductase subunit 2 B, chloroplastic (510 aa).

13 consecutive transmembrane segments (helical) span residues 24–44 (LLLF…GLIL), 57–77 (IPWL…ALLF), 99–119 (IFQF…VEYI), 124–144 (MAIT…MFLC), 150–170 (ITIF…SGYT), 183–203 (YLLM…WLYG), 229–249 (ISIA…PAPF), 295–315 (WHLL…LVAI), 323–343 (MLAY…IVGD), 347–367 (GYAS…GTFA), 395–415 (ALSS…AGFF), 418–438 (LHLF…IGLL), and 484–504 (MIVC…IIAI).

This sequence belongs to the complex I subunit 2 family. In terms of assembly, NDH is composed of at least 16 different subunits, 5 of which are encoded in the nucleus.

The protein resides in the plastid. The protein localises to the chloroplast thylakoid membrane. The catalysed reaction is a plastoquinone + NADH + (n+1) H(+)(in) = a plastoquinol + NAD(+) + n H(+)(out). It catalyses the reaction a plastoquinone + NADPH + (n+1) H(+)(in) = a plastoquinol + NADP(+) + n H(+)(out). Functionally, NDH shuttles electrons from NAD(P)H:plastoquinone, via FMN and iron-sulfur (Fe-S) centers, to quinones in the photosynthetic chain and possibly in a chloroplast respiratory chain. The immediate electron acceptor for the enzyme in this species is believed to be plastoquinone. Couples the redox reaction to proton translocation, and thus conserves the redox energy in a proton gradient. This Ceratophyllum demersum (Rigid hornwort) protein is NAD(P)H-quinone oxidoreductase subunit 2 B, chloroplastic.